The primary structure comprises 331 residues: Carbonic anhydrase-related protein 11 (331 aa).

The N-terminal stretch at methionine 1–alanine 23 is a signal peptide. In terms of domain architecture, Alpha-carbonic anhydrase spans aspartate 33–arginine 306. N-linked (GlcNAc...) asparagine glycans are attached at residues asparagine 118, asparagine 170, asparagine 189, and asparagine 263. The interval arginine 303 to arginine 331 is disordered. The segment covering leucine 322–arginine 331 has biased composition (basic and acidic residues).

The protein belongs to the alpha-carbonic anhydrase family.

It is found in the secreted. Functionally, does not have a catalytic activity. The chain is Carbonic anhydrase-related protein 11 (CA11) from Sus scrofa (Pig).